The following is a 71-amino-acid chain: Large ribosomal subunit protein uL29 (71 aa).

It belongs to the universal ribosomal protein uL29 family.

The protein is Large ribosomal subunit protein uL29 (rpl29) of Aeropyrum pernix (strain ATCC 700893 / DSM 11879 / JCM 9820 / NBRC 100138 / K1).